We begin with the raw amino-acid sequence, 265 residues long: Exosome complex component Rrp4 (265 aa).

Residues 65 to 137 (GDNVIGKIVD…EVNNIDLTTK (73 aa)) enclose the S1 motif domain. Positions 147-205 (KGGQIVKITPSRVPRVIGRGGSMINMIKKLTMTRIIVGQNGWIWVSGKNDALEKLAIEA) constitute a KH domain. The disordered stretch occupies residues 241–265 (EIPKLEEEPQGEDEVNGNDGEARGA).

This sequence belongs to the RRP4 family. As to quaternary structure, component of the archaeal exosome complex. Forms a trimer of Rrp4 and/or Csl4 subunits. The trimer associates with a hexameric ring-like arrangement composed of 3 Rrp41-Rrp42 heterodimers.

The protein localises to the cytoplasm. Non-catalytic component of the exosome, which is a complex involved in RNA degradation. Increases the RNA binding and the efficiency of RNA degradation. Confers strong poly(A) specificity to the exosome. The chain is Exosome complex component Rrp4 from Pyrococcus abyssi (strain GE5 / Orsay).